Here is a 218-residue protein sequence, read N- to C-terminus: Pyridoxine/pyridoxamine 5'-phosphate oxidase (218 aa).

Residues 66–71 (RVVLLK), Arg87, Lys88, and Gln110 contribute to the FMN site. Lys71 contributes to the substrate binding site. The substrate site is built by Tyr128, Arg132, and Ser136. FMN contacts are provided by residues 145-146 (QS) and Trp190. 196-198 (RLH) is a binding site for substrate. An FMN-binding site is contributed by Arg200.

The protein belongs to the pyridoxamine 5'-phosphate oxidase family. In terms of assembly, homodimer. Requires FMN as cofactor.

It carries out the reaction pyridoxamine 5'-phosphate + O2 + H2O = pyridoxal 5'-phosphate + H2O2 + NH4(+). It catalyses the reaction pyridoxine 5'-phosphate + O2 = pyridoxal 5'-phosphate + H2O2. It participates in cofactor metabolism; pyridoxal 5'-phosphate salvage; pyridoxal 5'-phosphate from pyridoxamine 5'-phosphate: step 1/1. It functions in the pathway cofactor metabolism; pyridoxal 5'-phosphate salvage; pyridoxal 5'-phosphate from pyridoxine 5'-phosphate: step 1/1. In terms of biological role, catalyzes the oxidation of either pyridoxine 5'-phosphate (PNP) or pyridoxamine 5'-phosphate (PMP) into pyridoxal 5'-phosphate (PLP). The chain is Pyridoxine/pyridoxamine 5'-phosphate oxidase from Anaplasma marginale (strain St. Maries).